The following is a 166-amino-acid chain: Putative esterase sll0410 (166 aa).

Asp45 is an active-site residue.

The protein belongs to the 4-hydroxybenzoyl-CoA thioesterase family.

This is Putative esterase sll0410 from Synechocystis sp. (strain ATCC 27184 / PCC 6803 / Kazusa).